We begin with the raw amino-acid sequence, 597 residues long: Probable translation initiation factor IF-2 (597 aa).

The tr-type G domain maps to 8 to 225 (LRQPIVVVLG…LLAGLTQQYL (218 aa)). The interval 17–24 (GHVDHGKT) is G1. 17 to 24 (GHVDHGKT) contributes to the GTP binding site. The segment at 42-46 (EMTQE) is G2. Residues 81-84 (DTPG) form a G3 region. GTP is bound by residues 81–85 (DTPGH) and 135–138 (NKID). The interval 135 to 138 (NKID) is G4. Residues 203-205 (SGK) are G5.

The protein belongs to the TRAFAC class translation factor GTPase superfamily. Classic translation factor GTPase family. IF-2 subfamily.

Function in general translation initiation by promoting the binding of the formylmethionine-tRNA to ribosomes. Seems to function along with eIF-2. The sequence is that of Probable translation initiation factor IF-2 from Metallosphaera sedula (strain ATCC 51363 / DSM 5348 / JCM 9185 / NBRC 15509 / TH2).